A 387-amino-acid polypeptide reads, in one-letter code: MKALHFGAGNIGRGFIGKLLADAGAQLTFADVNQPLLDELNKRKRYQVNVVGEQARVEEVKNVSAVNSGSPEVVALIAEADIVTTAVGPQILARIAATVAQGLITRHQQGNTRPLNIIACENMVRGTSQLKQHVFAALSEDEQIWVEQHVGFVDSAVDRIVPPSEAGSTDILAVTVETFSEWIVDGTQFKGQPPEIVGMELTDNLMAFVERKLFTLNTGHAITAYLGQLAGHQTIRDAILDPAVRQTVKGAMEESGAVLIKRYAFDPQKHAAYINKILSRFENPYLHDDVERVGRQPLRKLSAGDRLIKPLLGTLEYQLPHDSLVTGIAAAMSYRSEQDPQAQELVTLLAQLGPKAALAQISGLPADSEVVEQAVSVYNAMQQKLAH.

NAD(+) is bound at residue 3–14; that stretch reads ALHFGAGNIGRG.

The protein belongs to the mannitol dehydrogenase family.

The catalysed reaction is D-mannitol 1-phosphate + NAD(+) = beta-D-fructose 6-phosphate + NADH + H(+). This is Mannitol-1-phosphate 5-dehydrogenase from Yersinia pestis bv. Antiqua (strain Antiqua).